The primary structure comprises 134 residues: MVMDLRTWDDITVHQAENSVFIWEVPNPLYFKMYXVEDPLYTHTRIYHIQIRFNHNLRRALNLHKAFLNFQVWTESIRASGTTYLNRFRHLVMLYLDRLGVIGLNNVIRAVSWATDRSYVNYVLENHEIKFKIY.

It belongs to the geminiviridae replication enhancer protein family. In terms of assembly, homooligomer. Interacts with the replication-associated protein (REP). Interacts with host proliferating cell nuclear antigen (PCNA). Interacts with host retinoblastoma-related protein 1 (RBR1), and may thereby deregulate the host cell cycle. Oligomerization and interaction with PCNA are necessary for optimal replication enhancement.

Increases viral DNA accumulation. Enhances infectivity and symptom expression. This chain is Replication enhancer protein, found in Squash leaf curl virus (SLCV).